A 505-amino-acid polypeptide reads, in one-letter code: Ribose import ATP-binding protein RbsA 2 (505 aa).

2 consecutive ABC transporter domains span residues 13–249 and 259–503; these read LALE…VGRD and VRAG…TGRA. 45 to 52 serves as a coordination point for ATP; sequence GENGAGKS.

This sequence belongs to the ABC transporter superfamily. Ribose importer (TC 3.A.1.2.1) family. The complex is composed of an ATP-binding protein (RbsA), two transmembrane proteins (RbsC) and a solute-binding protein (RbsB).

It is found in the cell membrane. It carries out the reaction D-ribose(out) + ATP + H2O = D-ribose(in) + ADP + phosphate + H(+). Part of the ABC transporter complex RbsABC involved in ribose import. Responsible for energy coupling to the transport system. In Streptomyces avermitilis (strain ATCC 31267 / DSM 46492 / JCM 5070 / NBRC 14893 / NCIMB 12804 / NRRL 8165 / MA-4680), this protein is Ribose import ATP-binding protein RbsA 2.